We begin with the raw amino-acid sequence, 703 residues long: Metastasis-associated protein MTA1 (703 aa).

One can recognise a BAH domain in the interval 1-164 (MAANMYRVGD…PQQKTLLADK (164 aa)). The region spanning 165-276 (GEIRVGNRYQ…KAISALVPQG (112 aa)) is the ELM2 domain. Lys182 participates in a covalent cross-link: Glycyl lysine isopeptide (Lys-Gly) (interchain with G-Cter in ubiquitin). Residues 283–335 (DEMEEWSASEANLFEEALEKYGKDFTDIQQDFLPWKSLTSIIEYYYMWKTTDR) enclose the SANT domain. Ser386 carries the phosphoserine modification. Residues 393–420 (CESCYTTQSYQWYSWGPPNMQCRLCASC) form a GATA-type; atypical zinc finger. Residues 437-460 (DGERPGPNRNNMSPHGIPARSSGS) form a disordered region. Position 449 is a phosphoserine (Ser449). Residue Lys509 forms a Glycyl lysine isopeptide (Lys-Gly) (interchain with G-Cter in SUMO2 and SUMO3) linkage. Ser522 carries the post-translational modification Phosphoserine. The segment covering 542-552 (ETHPRPPKPDP) has biased composition (basic and acidic residues). Residues 542-583 (ETHPRPPKPDPVKSSSSVLSSLTPAKSAPVINNGSPTILGKR) are disordered. The short motif at 545–552 (PRPPKPDP) is the SH3-binding element. Lys549 is covalently cross-linked (Glycyl lysine isopeptide (Lys-Gly) (interchain with G-Cter in SUMO2)). Positions 553–565 (VKSSSSVLSSLTP) are enriched in low complexity. Thr564 carries the post-translational modification Phosphothreonine. Ser576 carries the phosphoserine modification. Thr578 is subject to Phosphothreonine. Position 614 is an N6-acetyllysine; alternate (Lys614). Lys614 participates in a covalent cross-link: Glycyl lysine isopeptide (Lys-Gly) (interchain with G-Cter in ubiquitin); alternate. Phosphoserine is present on Ser627. An interaction with RBBP4 region spans residues 644–674 (DVFYMATEETRKIRKLLSSSETKRAARRPYK). Residues 661 to 703 (SSSETKRAARRPYKPIALRQSQALPLRPPPPAPVNDEPIVIED) are disordered. The short motif at 684–693 (LPLRPPPPAP) is the SH3-binding element. Residues 699-703 (IVIED) carry the SUMO interaction motif 1 (SIM); crucial for efficient sumoylation motif.

The protein belongs to the metastasis-associated protein family. As to quaternary structure, component of the nucleosome remodeling and deacetylase (NuRD) repressor complex, composed of core proteins MTA1, MTA2, MTA3, RBBP4, RBBP7, HDAC1, HDAC2, MBD2, MBD3, and peripherally associated proteins CDK2AP1, CDK2AP2, GATAD2A, GATAD2B, CHD3, CHD4 and CHD5. The exact stoichiometry of the NuRD complex is unknown, and some subunits such as MBD2 and MBD3, GATAD2A and GATAD2B, and CHD3, CHD4 and CHD5 define mutually exclusive NuRD complexes. Interacts with RBBP4; the interaction is direct. Interacts with BMAL1. Interacts with CLOCK. Interacts with COP1. Interacts with CSNK1G2 in the cytoplasm. Interacts with EP300. Interacts with HDAC2. Interacts with ITGB3BP/CENPR. Interacts with MBD3L2. Interacts with MDM2. Interacts with NACC2. Interacts with p53/TP53. Interacts with PIAS1. Interacts with PIAS3. Interacts with PIAS4. Interacts with PWWP2A. Interacts with PWWP2B. Interacts with SENP1. Interacts with SENP2. Interacts with SIX3; facilitates the binding of SIX3 to the core DNA motif of SIX3 promoter. Interacts with SUMO1. Interacts with SUMO2. Interacts with TFCP2L1; which is indispensable for TFCP2L1-mediated self-renewal-promoting effect and endoderm-inhibiting action. Interacts with TFAP2C. Interacts with TPR. Interacts with UBE2I/UBC9. Post-translationally, phosphorylation by CSNK1G2/CK1 triggered by estrogen enhances corepression of estrogen receptor (ER). In terms of processing, acetylation is essential for its transcriptional coactivator activity. Sumoylation positively regulates its transcriptional corepressor activity but does not affect the protein stability. Sumoylated preferentially by SUMO2 or SUMO3 than SUMO1. Sumoylation is enhanced by PIAS1/3/4 and preferentially sumoylated by SUMO2 in the presence of PIAS1/3/4. Desumoylated by SENP1. Post-translationally, ubiquitinated by COP1, which leads to proteasomal degradation. Isoform 1 abundant in testis and expressed at low levels in brain, heart, lung, liver, and kidney. Isoform 2 abundant in adrenal gland, brain, colon, heart, liver, lung, muscle, prostate, stomach, testis, and thymus and expressed at low levels in duodenum, kidney, pancreas, parotid, and spleen.

It localises to the nucleus. Its subcellular location is the nucleus envelope. It is found in the cytoplasm. The protein localises to the cytoskeleton. The protein resides in the rough endoplasmic reticulum. It localises to the golgi apparatus. Its subcellular location is the zymogen granule. Functionally, transcriptional coregulator which can act as both a transcriptional corepressor and coactivator. Acts as a component of the histone deacetylase NuRD complex which participates in the remodeling of chromatin. In the NuRD complex, regulates transcription of its targets by modifying the acetylation status of the target chromatin and cofactor accessibility to the target DNA. In conjunction with other components of NuRD, acts as a transcriptional corepressor of BRCA1, ESR1, TFF1 and CDKN1A. Acts as a transcriptional coactivator of BCAS3, and SUMO2, independent of the NuRD complex. Stimulates the expression of WNT1 by inhibiting the expression of its transcriptional corepressor SIX3. Regulates p53-dependent and -independent DNA repair processes following genotoxic stress. Regulates the stability and function of p53/TP53 by inhibiting its ubiquitination by COP1 and MDM2 thereby regulating the p53-dependent DNA repair. Plays a role in the regulation of the circadian clock and is essential for the generation and maintenance of circadian rhythms under constant light and for normal entrainment of behavior to light-dark (LD) cycles. Positively regulates the CLOCK-BMAL1 heterodimer mediated transcriptional activation of its own transcription and the transcription of CRY1. Regulates deacetylation of BMAL1 by regulating SIRT1 expression, resulting in derepressing CRY1-mediated transcription repression. With TFCP2L1, promotes establishment and maintenance of pluripotency in embryonic stem cells (ESCs) and inhibits endoderm differentiation. This Rattus norvegicus (Rat) protein is Metastasis-associated protein MTA1 (Mta1).